We begin with the raw amino-acid sequence, 133 residues long: Small ribosomal subunit protein uS8 (133 aa).

Belongs to the universal ribosomal protein uS8 family. As to quaternary structure, part of the 30S ribosomal subunit. Contacts proteins S5 and S12.

One of the primary rRNA binding proteins, it binds directly to 16S rRNA central domain where it helps coordinate assembly of the platform of the 30S subunit. In Endomicrobium trichonymphae, this protein is Small ribosomal subunit protein uS8.